A 932-amino-acid polypeptide reads, in one-letter code: Protocadherin gamma-A12 (932 aa).

A signal peptide spans 1 to 29; that stretch reads MIPARLHRDYKGLVLLGILLGTLWETGCT. Cadherin domains follow at residues 30–133, 134–242, 243–347, 348–452, 453–562, and 570–683; these read QIRY…APYF, RESE…APAF, AQPE…APEV, VLTS…PPVF, PQAS…APEI, and DGST…SPAN. Topologically, residues 30-692 are extracellular; it reads QIRYSVPEEL…NSETSDLTLY (663 aa). 3 N-linked (GlcNAc...) asparagine glycosylation sites follow: Asn-265, Asn-419, and Asn-545. Residues 693 to 713 traverse the membrane as a helical segment; sequence LVVAVAAVSCVFLAFVILLLA. Residues 714 to 932 are Cytoplasmic-facing; it reads LRLRRWHKSR…KKKSGKKEKK (219 aa). 2 disordered regions span residues 803–841 and 902–932; these read GHGLIEQAPPNTDWRFSQAQRPGTSGSQNGDDTGTWPNN and ATLTNAAGKRDGKAPAGGNGNKKKSGKKEKK. Over residues 816-841 the composition is skewed to polar residues; it reads WRFSQAQRPGTSGSQNGDDTGTWPNN. Basic residues predominate over residues 922-932; that stretch reads NKKKSGKKEKK.

It localises to the cell membrane. Its function is as follows. Potential calcium-dependent cell-adhesion protein. May be involved in the establishment and maintenance of specific neuronal connections in the brain. The sequence is that of Protocadherin gamma-A12 (PCDHGA12) from Pan troglodytes (Chimpanzee).